A 724-amino-acid polypeptide reads, in one-letter code: Phosphoribosylformylglycinamidine synthase subunit PurL (724 aa).

The active site involves His34. Residues Tyr37 and Lys75 each coordinate ATP. Glu77 serves as a coordination point for Mg(2+). Residues 78–81 and Arg100 contribute to the substrate site; that span reads SHNH. The active-site Proton acceptor is the His79. Asp101 is a binding site for Mg(2+). Gln221 is a binding site for substrate. Residue Asp249 participates in Mg(2+) binding. A substrate-binding site is contributed by 292 to 294; the sequence is ESQ. Asp478 and Gly515 together coordinate ATP. Ser518 is a binding site for substrate.

It belongs to the FGAMS family. In terms of assembly, monomer. Part of the FGAM synthase complex composed of 1 PurL, 1 PurQ and 2 PurS subunits.

It is found in the cytoplasm. The catalysed reaction is N(2)-formyl-N(1)-(5-phospho-beta-D-ribosyl)glycinamide + L-glutamine + ATP + H2O = 2-formamido-N(1)-(5-O-phospho-beta-D-ribosyl)acetamidine + L-glutamate + ADP + phosphate + H(+). It functions in the pathway purine metabolism; IMP biosynthesis via de novo pathway; 5-amino-1-(5-phospho-D-ribosyl)imidazole from N(2)-formyl-N(1)-(5-phospho-D-ribosyl)glycinamide: step 1/2. Functionally, part of the phosphoribosylformylglycinamidine synthase complex involved in the purines biosynthetic pathway. Catalyzes the ATP-dependent conversion of formylglycinamide ribonucleotide (FGAR) and glutamine to yield formylglycinamidine ribonucleotide (FGAM) and glutamate. The FGAM synthase complex is composed of three subunits. PurQ produces an ammonia molecule by converting glutamine to glutamate. PurL transfers the ammonia molecule to FGAR to form FGAM in an ATP-dependent manner. PurS interacts with PurQ and PurL and is thought to assist in the transfer of the ammonia molecule from PurQ to PurL. The chain is Phosphoribosylformylglycinamidine synthase subunit PurL from Caldivirga maquilingensis (strain ATCC 700844 / DSM 13496 / JCM 10307 / IC-167).